Consider the following 381-residue polypeptide: CD209 antigen (381 aa).

At 1–37 (MSDSKEPRLQQLGLLEEEQLGGVGFRQTRGYKSLAGC) the chain is on the cytoplasmic side. 3 short sequence motifs (endocytosis signal) span residues 14-15 (LL), 16-18 (EEE), and 31-34 (YKSL). The chain crosses the membrane as a helical; Signal-anchor for type II membrane protein span at residues 38–58 (LGHGPLVLQLLSFTLLAGLLV). The Extracellular portion of the chain corresponds to 59 to 381 (QVSKVPSSLS…TPTTPNPPPE (323 aa)). Asn80 carries an N-linked (GlcNAc...) asparagine glycan. Repeat copies occupy residues 96–118 (KQQE…PEKS), 119–141 (KQQE…PEKS), 142–164 (KLQE…PEKS), 165–187 (KQQE…PEKS), 188–210 (KQQE…PDRS), and 211–234 (KQQE…RPCP). Residues 96–303 (KQQEIYQELT…GLSDLNHEGT (208 aa)) form a 6 X approximate tandem repeats region. Cystine bridges form between Cys233–Cys244, Cys261–Cys354, and Cys333–Cys346. In terms of domain architecture, C-type lectin spans 240 to 355 (FQGNCYFMSN…CNLAKFWICK (116 aa)). Glu324, Asn326, Ile328, Glu331, Asn342, and Asp343 together coordinate Ca(2+). The disordered stretch occupies residues 359 to 381 (ASCSGDEERLLSPTPTTPNPPPE).

As to quaternary structure, homotetramer. Interacts with C1QBP; the interaction is indicative for a C1q:C1QBP:CD209 signaling complex. Interacts with ICAM2 and ICAM3 by binding to mannose-like carbohydrates. Interacts (via C-type lectin domain) with CEACAM1 (via Lewis X moieties); this interaction is regulated by the glycosylation pattern of CEACAM1 on cell types and regulates contact between dendritic cells and neutrophils. As to expression, expressed in lymph nodes.

The protein localises to the membrane. Pathogen-recognition receptor expressed on the surface of immature dendritic cells (DCs) and involved in initiation of primary immune response. Thought to mediate the endocytosis of pathogens which are subsequently degraded in lysosomal compartments. The receptor returns to the cell membrane surface and the pathogen-derived antigens are presented to resting T-cells via MHC class II proteins to initiate the adaptive immune response. Probably recognizes in a calcium-dependent manner high mannose N-linked oligosaccharides in a variety of pathogen antigens. In terms of biological role, on DCs it is a high affinity receptor for ICAM2 and ICAM3 by binding to mannose-like carbohydrates. May act as a DC rolling receptor that mediates transendothelial migration of DC presursors from blood to tissues by binding endothelial ICAM2. Seems to regulate DC-induced T-cell proliferation by binding to ICAM3 on T-cells in the immunological synapse formed between DC and T-cells. The protein is CD209 antigen (CD209) of Chlorocebus aethiops (Green monkey).